The chain runs to 61 residues: Large ribosomal subunit protein uL30 (61 aa).

Belongs to the universal ribosomal protein uL30 family. Part of the 50S ribosomal subunit.

The polypeptide is Large ribosomal subunit protein uL30 (Bordetella avium (strain 197N)).